Reading from the N-terminus, the 328-residue chain is uncharacterized protein (328 aa).

The 143-residue stretch at 37 to 179 (LTEKLLCHQG…AMTLLRCRKI (143 aa)) folds into the SIS domain. 52–57 (GIGKSG) lines the ATP pocket. 2 CBS domains span residues 207 to 264 (PRTE…GGDI) and 273 to 328 (MTRN…AGLL).

It belongs to the SIS family. GutQ/KpsF subfamily.

This is an uncharacterized protein from Chlamydia trachomatis serovar D (strain ATCC VR-885 / DSM 19411 / UW-3/Cx).